Consider the following 287-residue polypeptide: 4-hydroxybenzoate octaprenyltransferase (287 aa).

The next 8 membrane-spanning stretches (helical) occupy residues Ile23–Ala43, Gly46–Ile66, Leu99–Ile119, Leu141–Val161, Gly162–Ala182, Leu213–Asn233, Gly237–Ile257, and Phe266–Ala286.

Belongs to the UbiA prenyltransferase family. The cofactor is Mg(2+).

It localises to the cell inner membrane. The enzyme catalyses all-trans-octaprenyl diphosphate + 4-hydroxybenzoate = 4-hydroxy-3-(all-trans-octaprenyl)benzoate + diphosphate. It participates in cofactor biosynthesis; ubiquinone biosynthesis. Functionally, catalyzes the prenylation of para-hydroxybenzoate (PHB) with an all-trans polyprenyl group. Mediates the second step in the final reaction sequence of ubiquinone-8 (UQ-8) biosynthesis, which is the condensation of the polyisoprenoid side chain with PHB, generating the first membrane-bound Q intermediate 3-octaprenyl-4-hydroxybenzoate. The sequence is that of 4-hydroxybenzoate octaprenyltransferase from Edwardsiella ictaluri (strain 93-146).